Here is a 732-residue protein sequence, read N- to C-terminus: MTTLESLKIEDIPVDDIDFSDLEREFQIQDGGVNFDNFLVVDGAPVAPEAKVPVLEKVLTKLFSQAGKVLDMQIPVEDGKTKGHLFIEMESVSAAKEAIQLFNGKKLDAKHRLLVNSLNDMEKYGSDDFESQSHEPVVPDFAPTDFLRSWLQNQDGRDQFVLQKGDMTRVFWNRLAHQPDGVGEARKNWSNDVVKFSPKGTYLLSFHDQGVTSWGGPNFDRLKRFFHPDVSRLDVSPTEKFLITFSMNPIKPGEDTPFGPESEGHQICVWDLATGFLMKTFGIPPNAKLQWPLIRFSYDDKYCGRLGPNALAIYDIENNFQLLDGKLHKVEGIQDFSFAPKGVQLTYNRRKSDPTTLLAYWTPETNNQSCKAFLMTLPNKRIVKTVNLVQVSNVSIHWHEQADFVCFQVDRHTKSKKTFFTNLEICKLNESEIPVEKIEMKDRVLELAWEPKGTRFVTISKMDNGGEENPMYPKNFVKFFAPEKKDNKDKDLAVLPDQLKWKLVKTVDQQFANCISWSPAGRFVAVCTIVNGKEIKKASLDFYDFDFTGEKTLNEVQDVKASLQAVAHIDNQFFTDLEWDSSGRFLTAWSSYSKHKLENGYTIYNCCGEAVRKEIVDQFRNFVWRPRPESLLSNAEKKKARKNLKQWSVKFEEQDAMESDSALRDLILKRRAELSAWVSYREQSKERLESEDSYTIFDNFESDKADETQYVTVEEVKEEILEETQEEVESFE.

The interval 1–94 is sufficient for interaction with HCR1 and TIF32; that stretch reads MTTLESLKIE…LFIEMESVSA (94 aa). The tract at residues 1–219 is sufficient for interaction with PIC8; sequence MTTLESLKIE…GVTSWGGPNF (219 aa). An RRM domain is found at 37–120; that stretch reads NFLVVDGAPV…HRLLVNSLND (84 aa). 4 WD repeats span residues 185–224, 237–280, 439–481, and 507–554; these read ARKN…RLKR, PTEK…LMKT, EMKD…KFFA, and VDQQ…KTLN.

It belongs to the eIF-3 subunit B family. As to quaternary structure, component of the eukaryotic translation initiation factor 3 (eIF-3) complex.

It localises to the cytoplasm. Its function is as follows. RNA-binding component of the eukaryotic translation initiation factor 3 (eIF-3) complex, which is involved in protein synthesis of a specialized repertoire of mRNAs and, together with other initiation factors, stimulates binding of mRNA and methionyl-tRNAi to the 40S ribosome. The eIF-3 complex specifically targets and initiates translation of a subset of mRNAs involved in cell proliferation. This Kluyveromyces lactis (strain ATCC 8585 / CBS 2359 / DSM 70799 / NBRC 1267 / NRRL Y-1140 / WM37) (Yeast) protein is Eukaryotic translation initiation factor 3 subunit B.